The chain runs to 124 residues: Sulfiredoxin (124 aa).

It belongs to the sulfiredoxin family. As to quaternary structure, interacts with tpx1 in response to oxidative stress.

It is found in the cytoplasm. It localises to the nucleus. The enzyme catalyses S-hydroxy-S-oxy-L-cysteinyl-[peroxiredoxin] + [protein]-dithiol + ATP = S-hydroxy-L-cysteinyl-[peroxiredoxin] + [protein]-disulfide + ADP + phosphate. In terms of biological role, contributes to oxidative stress resistance by reducing cysteine-sulfinic acid formed under exposure to oxidants in a peroxiredoxin. May catalyze the reduction in a multi-step process by acting both as a specific phosphotransferase and a thioltransferase. The chain is Sulfiredoxin (srx1) from Schizosaccharomyces pombe (strain 972 / ATCC 24843) (Fission yeast).